We begin with the raw amino-acid sequence, 677 residues long: UvrABC system protein B (677 aa).

The 389-residue stretch at 24–412 (EGVLEGVPAQ…EGIVVEQVIR (389 aa)) folds into the Helicase ATP-binding domain. 37–44 (GVTGSGKT) lines the ATP pocket. The Beta-hairpin motif lies at 90–113 (YYDYYQPEAYLPSSDTYIEKDLAI). A Helicase C-terminal domain is found at 429–591 (QIDDLMEEIQ…ITPQQIKKAR (163 aa)). Positions 635-670 (EKSMERTRKLMQEAAKKLEFIEAAQYRDELLKMEDL) constitute a UVR domain.

This sequence belongs to the UvrB family. Forms a heterotetramer with UvrA during the search for lesions. Interacts with UvrC in an incision complex.

It is found in the cytoplasm. Functionally, the UvrABC repair system catalyzes the recognition and processing of DNA lesions. A damage recognition complex composed of 2 UvrA and 2 UvrB subunits scans DNA for abnormalities. Upon binding of the UvrA(2)B(2) complex to a putative damaged site, the DNA wraps around one UvrB monomer. DNA wrap is dependent on ATP binding by UvrB and probably causes local melting of the DNA helix, facilitating insertion of UvrB beta-hairpin between the DNA strands. Then UvrB probes one DNA strand for the presence of a lesion. If a lesion is found the UvrA subunits dissociate and the UvrB-DNA preincision complex is formed. This complex is subsequently bound by UvrC and the second UvrB is released. If no lesion is found, the DNA wraps around the other UvrB subunit that will check the other stand for damage. In Bacteroides fragilis (strain ATCC 25285 / DSM 2151 / CCUG 4856 / JCM 11019 / LMG 10263 / NCTC 9343 / Onslow / VPI 2553 / EN-2), this protein is UvrABC system protein B.